A 357-amino-acid polypeptide reads, in one-letter code: DNA replication and repair protein RecF (357 aa).

ATP is bound at residue Gly-31–Thr-38.

Belongs to the RecF family.

The protein resides in the cytoplasm. In terms of biological role, the RecF protein is involved in DNA metabolism; it is required for DNA replication and normal SOS inducibility. RecF binds preferentially to single-stranded, linear DNA. It also seems to bind ATP. This is DNA replication and repair protein RecF from Coxiella burnetii (strain CbuK_Q154) (Coxiella burnetii (strain Q154)).